The following is a 950-amino-acid chain: Voltage-gated inwardly rectifying potassium channel KCNH6 (950 aa).

Topologically, residues Met1–Trp261 are cytoplasmic. The PAS domain maps to Ile41–Thr70. In terms of domain architecture, PAC spans Cys92–Leu144. The tract at residues Leu154–Lys174 is disordered. Residues Leu262–Leu282 form a helical membrane-spanning segment. The Extracellular portion of the chain corresponds to Ser283–Ser298. A helical transmembrane segment spans residues Pro299–Phe319. The Cytoplasmic segment spans residues Arg320 to His340. A helical membrane pass occupies residues Tyr341 to Phe361. Over Arg362–Thr370 the chain is Extracellular. Residues Leu371–Asp391 traverse the membrane as a helical; Voltage-sensor segment. Residues Arg392 to Ala398 are Cytoplasmic-facing. The chain crosses the membrane as a helical span at residues Ala399–Trp419. At Tyr420–Tyr463 the chain is on the extracellular side. The pore-forming intramembrane region spans Val464–Pro484. The Selectivity filter signature appears at Ser476–Asn481. Residues Asn485–Lys490 lie on the Extracellular side of the membrane. Residues Val491–Val511 traverse the membrane as a helical segment. The Cytoplasmic segment spans residues Ser512–Ser950. Residues Ala594–Leu694 form a cNMP-binding domain region. 2 disordered regions span residues Gly719 to Leu750 and Val890 to Ser950. The segment covering Asn740–Leu750 has biased composition (polar residues). A compositionally biased stretch (low complexity) spans Pro898 to Leu912.

It belongs to the potassium channel family. H (Eag) (TC 1.A.1.20) subfamily. Kv11.2/KCNH6 sub-subfamily. In terms of assembly, the potassium channel is probably composed of a homo- or heterotetrameric complex of pore-forming alpha subunits that can associate only within their subfamily. As to expression, highly expressed in celiac and superior mesenteric ganglia, but not detected in brain or in heart. Detected at low levels in retina. Also found in pituitary. Also found in the olfactory bulb (granular and mitral cell layers).

It is found in the cell membrane. It catalyses the reaction K(+)(in) = K(+)(out). Functionally, pore-forming (alpha) subunit of voltage-gated inwardly rectifying potassium channel. Characterized by unusual gating kinetics by producing relatively small outward currents during membrane depolarization and large inward currents during subsequent repolarization which reflect a rapid inactivation during depolarization and quick recovery from inactivation but slow deactivation (closing) during repolarization. Activates even more slowly than KCNH2. In Rattus norvegicus (Rat), this protein is Voltage-gated inwardly rectifying potassium channel KCNH6.